The sequence spans 103 residues: MANQRIRIRLKAFDHRLIDQSAREIVETAKRTGAHVKGPIPLPVKKEKFTILISPHVNKDARDQYEIRTHKRLMDIIDPTDKTVDALMKLDLAAGVDVQIKLY.

This sequence belongs to the universal ribosomal protein uS10 family. Part of the 30S ribosomal subunit.

In terms of biological role, involved in the binding of tRNA to the ribosomes. This Alkalilimnicola ehrlichii (strain ATCC BAA-1101 / DSM 17681 / MLHE-1) protein is Small ribosomal subunit protein uS10.